Consider the following 337-residue polypeptide: Cytoskeleton protein RodZ (337 aa).

Over 1-111 the chain is Cytoplasmic; that stretch reads MNTEATHDQN…LGKRRKKRDG (111 aa). An HTH cro/C1-type domain is found at 19-71; sequence LRNAREQLGLSQQAVAERLCLKVSTVRDIEEDKAPADLASTFLRGYIRSYARL. The segment at residues 30–49 is a DNA-binding region (H-T-H motif); sequence QQAVAERLCLKVSTVRDIEE. A helical; Signal-anchor for type II membrane protein transmembrane segment spans residues 112–132; that stretch reads WLMTFTWLVLFVVVGLTGAWW. The Periplasmic segment spans residues 133–337; it reads WQNHKAQQEE…TLNAEQSPAQ (205 aa). The segment at 155–220 is disordered; it reads NAGGDSAQSV…QNAVVAPSQA (66 aa). The segment covering 160–192 has biased composition (polar residues); that stretch reads SAQSVPLDTSEAASQDSTPAPTAPVDSTATNAV. A compositionally biased stretch (low complexity) spans 193-217; that stretch reads PQTPDASATTTAPAADAQQNAVVAP.

This sequence belongs to the RodZ family.

The protein localises to the cell inner membrane. Cytoskeletal protein that is involved in cell-shape control through regulation of the length of the long axis. The chain is Cytoskeleton protein RodZ from Citrobacter koseri (strain ATCC BAA-895 / CDC 4225-83 / SGSC4696).